Consider the following 625-residue polypeptide: ATP-binding cassette sub-family F member 2 (625 aa).

The interval Met-1–Glu-54 is disordered. Basic and acidic residues predominate over residues Ala-40 to Glu-54. ABC transporter domains are found at residues Ala-88–Met-327 and Ile-398–Glu-615. Gly-120–Ser-127 is an ATP binding site. A Phosphothreonine modification is found at Thr-220. Lys-306 carries the post-translational modification N6-acetyllysine. Gly-432–Ser-439 contacts ATP. Position 514 is a phosphoserine (Ser-514).

The protein belongs to the ABC transporter superfamily. ABCF family. EF3 subfamily.

The polypeptide is ATP-binding cassette sub-family F member 2 (ABCF2) (Bos taurus (Bovine)).